We begin with the raw amino-acid sequence, 725 residues long: Catalase-peroxidase 1 (725 aa).

The tryptophyl-tyrosyl-methioninium (Trp-Tyr) (with M-250) cross-link spans 96–224 (WHSAGSYRLA…LAAVQMGLIY (129 aa)). Catalysis depends on histidine 97, which acts as the Proton acceptor. Residues 224–250 (YVNPEGVDGNPDPLRTAKDVRETFKRM) constitute a cross-link (tryptophyl-tyrosyl-methioninium (Tyr-Met) (with W-96)). Heme b is bound at residue histidine 265.

Belongs to the peroxidase family. Peroxidase/catalase subfamily. As to quaternary structure, homodimer or homotetramer. It depends on heme b as a cofactor. In terms of processing, formation of the three residue Trp-Tyr-Met cross-link is important for the catalase, but not the peroxidase activity of the enzyme.

It carries out the reaction H2O2 + AH2 = A + 2 H2O. The enzyme catalyses 2 H2O2 = O2 + 2 H2O. Its function is as follows. Bifunctional enzyme with both catalase and broad-spectrum peroxidase activity. The chain is Catalase-peroxidase 1 from Idiomarina loihiensis (strain ATCC BAA-735 / DSM 15497 / L2-TR).